Here is a 374-residue protein sequence, read N- to C-terminus: Chaperone protein DnaJ (374 aa).

One can recognise a J domain in the interval 5–70 (DYYEVLGVAR…DKRARYDRFG (66 aa)). A CR-type zinc finger spans residues 135 to 213 (GDEVTLRLPK…CKGSGILQQV (79 aa)). Positions 148, 151, 165, 168, 187, 190, 201, and 204 each coordinate Zn(2+). CXXCXGXG motif repeat units lie at residues 148 to 155 (CDECNGSG), 165 to 172 (CRHCGGNG), 187 to 194 (CPVCRGEG), and 201 to 208 (CPKCKGSG).

It belongs to the DnaJ family. As to quaternary structure, homodimer. The cofactor is Zn(2+).

It is found in the cytoplasm. Functionally, participates actively in the response to hyperosmotic and heat shock by preventing the aggregation of stress-denatured proteins and by disaggregating proteins, also in an autonomous, DnaK-independent fashion. Unfolded proteins bind initially to DnaJ; upon interaction with the DnaJ-bound protein, DnaK hydrolyzes its bound ATP, resulting in the formation of a stable complex. GrpE releases ADP from DnaK; ATP binding to DnaK triggers the release of the substrate protein, thus completing the reaction cycle. Several rounds of ATP-dependent interactions between DnaJ, DnaK and GrpE are required for fully efficient folding. Also involved, together with DnaK and GrpE, in the DNA replication of plasmids through activation of initiation proteins. This is Chaperone protein DnaJ from Nitratidesulfovibrio vulgaris (strain DSM 19637 / Miyazaki F) (Desulfovibrio vulgaris).